Here is a 97-residue protein sequence, read N- to C-terminus: MVCVPCFIIPVLLFLWHRFIQPYVLRFWNPWEKKDKDGNVIKDGSSTEFPFQCKGGVCPFPVKDKAKQEVAASGSGSNGTATAVGSEGEAEETKKSQ.

Residues 69–97 (EVAASGSGSNGTATAVGSEGEAEETKKSQ) are disordered. Positions 74 to 83 (GSGSNGTATA) are enriched in polar residues.

The protein belongs to the UPF0729 family.

The chain is UPF0729 protein AAEL015238 from Aedes aegypti (Yellowfever mosquito).